A 268-amino-acid chain; its full sequence is 4-hydroxy-tetrahydrodipicolinate reductase (268 aa).

Residues 10–15 (GASGRM) and aspartate 36 contribute to the NAD(+) site. Arginine 37 is an NADP(+) binding site. NAD(+)-binding positions include 99–101 (GTT) and 123–126 (SANM). Histidine 156 functions as the Proton donor/acceptor in the catalytic mechanism. Position 157 (histidine 157) interacts with (S)-2,3,4,5-tetrahydrodipicolinate. Lysine 160 functions as the Proton donor in the catalytic mechanism. 166–167 (GT) lines the (S)-2,3,4,5-tetrahydrodipicolinate pocket.

The protein belongs to the DapB family.

The protein resides in the cytoplasm. The catalysed reaction is (S)-2,3,4,5-tetrahydrodipicolinate + NAD(+) + H2O = (2S,4S)-4-hydroxy-2,3,4,5-tetrahydrodipicolinate + NADH + H(+). The enzyme catalyses (S)-2,3,4,5-tetrahydrodipicolinate + NADP(+) + H2O = (2S,4S)-4-hydroxy-2,3,4,5-tetrahydrodipicolinate + NADPH + H(+). The protein operates within amino-acid biosynthesis; L-lysine biosynthesis via DAP pathway; (S)-tetrahydrodipicolinate from L-aspartate: step 4/4. Catalyzes the conversion of 4-hydroxy-tetrahydrodipicolinate (HTPA) to tetrahydrodipicolinate. This is 4-hydroxy-tetrahydrodipicolinate reductase from Burkholderia pseudomallei (strain 1710b).